A 504-amino-acid chain; its full sequence is MNRTTLILFFIILSNTITVIHGYVRGCYYTNWAQYRDGEGKFLPGNIPNGLCTHILYAFAKVDELGDSKPFEWNDEDTEWSKGMYSAVTKLRETNPGLKVLLSYGGYNFGSAIFTGIAKSAQKTERFIKSAIAFLRKNNFDGFDLDWEYPVGVAEEHAKLVEAMKTAFVEEAKTSGKQRLLLTAAVSAGKGTIDGSYNVESLGKNFDLLFLMSYDLHGSWEKNVDLHGKLHPTKGEVSGIGIFNTEFAADYWASKGMPKEKIIIGIPMYAQGWTLDNPSETAIGAAASRPSSASKTNPAGGTASYWEICKYLKEGGKETVHQEGVGAYMVKGDQWYGYDNEETIRIKMKWLKEKGYGGAFIWALDFDDFTGKSCGKGPYPLLNAISSELEGESENPEITTEEPSITETEAYETDETEETSETEAYDTDETEETSETEATTYDTDETEGQECPERDGLFPHPTDCHLFIQCANNIAYVMQCPATTFFNDAIKVCDHMTNAPDTCI.

A signal peptide spans 1–22 (MNRTTLILFFIILSNTITVIHG). In terms of domain architecture, GH18 spans 23–392 (YVRGCYYTNW…NAISSELEGE (370 aa)). Cysteines 27 and 52 form a disulfide. Chitin is bound by residues 78–79 (TE) and 105–108 (GGYN). Residue glutamate 148 is the Proton donor of the active site. Chitin contacts are provided by residues tyrosine 149, 212–215 (MSYD), and tryptophan 362. The disordered stretch occupies residues 389–450 (LEGESENPEI…YDTDETEGQE (62 aa)). The segment covering 396 to 408 (PEITTEEPSITET) has biased composition (low complexity). A run of 2 repeats spans residues 407–420 (ETEA…EETS) and 421–434 (ETEA…EETS). A 3 X 14 AA approximate tandem repeats of E-T-E-A-Y-[ED]-T-D-E-T-E-E-T-S region spans residues 407 to 448 (ETEAYETDETEETSETEAYDTDETEETSETEATTYDTDETEG). Residues 409 to 435 (EAYETDETEETSETEAYDTDETEETSE) are compositionally biased toward acidic residues. A 3; approximate repeat occupies 435 to 448 (ETEATTYDTDETEG). In terms of domain architecture, Chitin-binding type-2 spans 448–504 (GQECPERDGLFPHPTDCHLFIQCANNIAYVMQCPATTFFNDAIKVCDHMTNAPDTCI). Cysteine 480 and cysteine 493 are disulfide-bonded.

The protein belongs to the glycosyl hydrolase 18 family. Chitinase class II subfamily. Post-translationally, O-glycosylated.

It carries out the reaction Random endo-hydrolysis of N-acetyl-beta-D-glucosaminide (1-&gt;4)-beta-linkages in chitin and chitodextrins.. In terms of biological role, microfilarial chitinase, which may function to degrade chitin-containing structures in the micro-filaria or in its mosquito vector during parasite development and transmission. The polypeptide is Endochitinase (Brugia malayi (Filarial nematode worm)).